We begin with the raw amino-acid sequence, 96 residues long: Putative pterin-4-alpha-carbinolamine dehydratase (96 aa).

The protein belongs to the pterin-4-alpha-carbinolamine dehydratase family.

The catalysed reaction is (4aS,6R)-4a-hydroxy-L-erythro-5,6,7,8-tetrahydrobiopterin = (6R)-L-erythro-6,7-dihydrobiopterin + H2O. This chain is Putative pterin-4-alpha-carbinolamine dehydratase, found in Prochlorococcus marinus (strain MIT 9303).